A 61-amino-acid polypeptide reads, in one-letter code: Conotoxin Bt5.1 (61 aa).

The first 22 residues, 1–22 (MRGLPVFVILLLLIASEPSVDA), serve as a signal peptide directing secretion. The propeptide occupies 23 to 48 (RPKTKADVPLTSLNDNAKRTLQILRN).

It belongs to the conotoxin T superfamily. In terms of processing, contains 2 disulfide bonds that can be either 'C1-C3, C2-C4' or 'C1-C4, C2-C3', since these disulfide connectivities have been observed for conotoxins with cysteine framework V (for examples, see AC P0DQQ7 and AC P81755). In terms of tissue distribution, expressed by the venom duct.

The protein resides in the secreted. This chain is Conotoxin Bt5.1, found in Conus betulinus (Beech cone).